Here is a 208-residue protein sequence, read N- to C-terminus: Small ribosomal subunit protein uS4 (208 aa).

Residues 98 to 159 (RRLDNVAYRL…KSRKVAAISE (62 aa)) enclose the S4 RNA-binding domain.

This sequence belongs to the universal ribosomal protein uS4 family. In terms of assembly, part of the 30S ribosomal subunit. Contacts protein S5. The interaction surface between S4 and S5 is involved in control of translational fidelity.

Functionally, one of the primary rRNA binding proteins, it binds directly to 16S rRNA where it nucleates assembly of the body of the 30S subunit. With S5 and S12 plays an important role in translational accuracy. The polypeptide is Small ribosomal subunit protein uS4 (Geobacter sp. (strain M21)).